Reading from the N-terminus, the 124-residue chain is MKVLILVLLGVVILQAAPIRKVENLLPTRNPPQNELVYWCTYANQCDFCWECIHGICRNRIQADWPVIHQNDWIINCTVSRWNGQCHYYEGSQQYLHHEMDCINPTSHTYPHTEYMKIYERDDL.

Positions 1 to 16 (MKVLILVLLGVVILQA) are cleaved as a signal peptide. A glycan (N-linked (GlcNAc...) asparagine; by host) is linked at asparagine 76.

This sequence belongs to the asfivirus MGF 110 family.

Plays a role in virus cell tropism, and may be required for efficient virus replication in macrophages. In African swine fever virus (isolate Warthog/Namibia/Wart80/1980) (ASFV), this protein is Protein MGF 110-8L.